We begin with the raw amino-acid sequence, 310 residues long: Protoheme IX farnesyltransferase 2 (310 aa).

The next 9 helical transmembrane spans lie at P25–G45, L49–I69, H98–T118, L121–M141, S145–C165, V176–F196, I222–T242, A245–Y265, and Q277–F297.

Belongs to the UbiA prenyltransferase family. Protoheme IX farnesyltransferase subfamily.

It is found in the cell inner membrane. It carries out the reaction heme b + (2E,6E)-farnesyl diphosphate + H2O = Fe(II)-heme o + diphosphate. Its pathway is porphyrin-containing compound metabolism; heme O biosynthesis; heme O from protoheme: step 1/1. In terms of biological role, converts heme B (protoheme IX) to heme O by substitution of the vinyl group on carbon 2 of heme B porphyrin ring with a hydroxyethyl farnesyl side group. This is Protoheme IX farnesyltransferase 2 from Shewanella sp. (strain ANA-3).